The following is a 295-amino-acid chain: Non-selective voltage-gated ion channel VDAC2 (295 aa).

ATP contacts are provided by K24 and K32. N6-acetyllysine; alternate is present on K32. K32 is modified (N6-succinyllysine; alternate). A Glycyl lysine isopeptide (Lys-Gly) (interchain with G-Cter in ubiquitin); alternate cross-link involves residue K32. 2 beta stranded membrane passes run 38 to 47 and 51 to 59; these read LVKLDVKTKS and VEFSTSGSS. K65 participates in a covalent cross-link: Glycyl lysine isopeptide (Lys-Gly) (interchain with G-Cter in ubiquitin). The beta stranded transmembrane segment at 66–76 threads the bilayer; sequence VSGTLETKYKW. The residue at position 79 (Y79) is a Phosphotyrosine. Beta stranded transmembrane passes span 81–88, 92–101, and 107–116; these read LTFTEKWN, TLGTEIAIED, and LKLTFDTTFS. Position 119 is a phosphothreonine (T119). K121 is subject to N6-acetyllysine; alternate. A Glycyl lysine isopeptide (Lys-Gly) (interchain with G-Cter in ubiquitin); alternate cross-link involves residue K121. Residue K122 forms a Glycyl lysine isopeptide (Lys-Gly) (interchain with G-Cter in ubiquitin) linkage. The next 4 membrane-spanning stretches (beta stranded) occupy residues 123 to 132, 135 to 142, 149 to 157, and 162 to 170; these read SGKIKSAYKR, INLGCDVD, AIHGSAVFG, and LAGYQMTFD. K173 participates in a covalent cross-link: Glycyl lysine isopeptide (Lys-Gly) (interchain with G-Cter in ubiquitin). The next 6 membrane-spanning stretches (beta stranded) occupy residues 175-187, 190-197, 201-210, 214-223, 230-239, and 243-250; these read KLTRSNFAVGYRT, FQLHTNVN, EFGGSIYQKV, FDTSVNLAWT, RFGIAAKYQL, and ASISAKVN. Y237 carries the post-translational modification Phosphotyrosine. Residue S252 is modified to Phosphoserine. NAD(+) contacts are provided by residues 254 to 256 and 272 to 276; these read LIG and SALVD. 2 beta stranded membrane passes run 254-263 and 266-275; these read LIGVGYTQTL and GVKLTLSALV. The residue at position 278 (K278) is an N6-acetyllysine; alternate. K278 is covalently cross-linked (Glycyl lysine isopeptide (Lys-Gly) (interchain with G-Cter in ubiquitin); alternate). The beta stranded transmembrane segment at 285–294 threads the bilayer; the sequence is HKLGLALELE.

Belongs to the eukaryotic mitochondrial porin family. As to quaternary structure, monomer, homodimer and higher order oligomers; formation of higher order structures is necessary for scramblase activity. Interacts with ARMC12 in a TBC1D21-dependent manner. Interacts with KLC3. Interacts with SPATA33. Interacts with PPP3CC in a SPATA33-dependent manner. In terms of processing, ubiquitinated by PRKN during mitophagy, leading to its degradation and enhancement of mitophagy. Deubiquitinated by USP30. Highly expressed in heart, kidney, brain and ascitic tumor with very low levels in liver. Expressed in the head region of epididymal sperm.

Its subcellular location is the mitochondrion outer membrane. It is found in the membrane. The enzyme catalyses chloride(in) = chloride(out). The catalysed reaction is K(+)(in) = K(+)(out). It catalyses the reaction a 1,2-diacyl-sn-glycero-3-phospho-L-serine(in) = a 1,2-diacyl-sn-glycero-3-phospho-L-serine(out). It carries out the reaction a 1,2-diacyl-sn-glycero-3-phosphocholine(in) = a 1,2-diacyl-sn-glycero-3-phosphocholine(out). The enzyme catalyses a 1,2-diacyl-sn-glycero-3-phospho-(1D-myo-inositol)(in) = a 1,2-diacyl-sn-glycero-3-phospho-(1D-myo-inositol)(out). Non-selective voltage-gated ion channel that mediates the transport of anions and cations through the mitochondrion outer membrane and plasma membrane. The channel adopts an open conformation at zero mV and a closed conformation at both positive and negative potentials. There are two populations of channels; the main that functions in a lower open-state conductance with lower ion selectivity, that switch, in a voltage-dependent manner, from the open to a low-conducting 'closed' state and the other that has a normal ion selectivity in the typical high conductance, 'open' state. Binds various lipids, including the sphingolipid ceramide, the phospholipid phosphatidylcholine, and the sterols cholesterol and oxysterol. Binding of ceramide promotes the mitochondrial outer membrane permeabilization (MOMP) apoptotic pathway. Functionally, catalyzes the scrambling of phospholipids across the outer mitochondrial membrane; the mechanism is unrelated to channel activity and is capable of translocating both anionic and zwitterionic phospholipids. This is Non-selective voltage-gated ion channel VDAC2 from Rattus norvegicus (Rat).